The following is a 483-amino-acid chain: Ankyrin repeat domain-containing protein M-T5 (483 aa).

6 ANK repeats span residues 32–63 (SRDT…DVNG), 67–101 (SRTS…DVNA), 105–137 (DGRY…SVYV), 177–210 (YGFN…DSSR), 250–279 (LDFT…DPNV), and 283–312 (LGNS…TPDA). Residues 390-478 (VSVFDTAFGL…LTDDEIHDLF (89 aa)) are PRANC/F-box-like.

Interacts (via PRANC/F-box-like domain) with the SKP1 component of the host SCF ubiquitin ligase complex. Interacts (via N-terminus) with host AKT1.

In terms of biological role, substrate-specific adapter of SKP1-containing E3 ubiquitin-protein ligases which mediate the ubiquitination and subsequent proteasomal degradation of host target proteins including CDKN1B. Disappearance of host CDKN1B correlates with cell cycle progression through the G0/G1 checkpoint. Therefore, viruses in infected cells are protected from diverse innate host antiviral responses normally triggered by G0/G1 cell cycle arrest. The sequence is that of Ankyrin repeat domain-containing protein M-T5 (m005R) from Myxoma virus (strain Lausanne) (MYXV).